The sequence spans 379 residues: MKLWKRAAAAIKDRKSLLAVGFSRRNSSYRNADLEAAIIKATSHDDSSVDYSNAHRVYKWIRSSPLNLKTLVYAISSRVNHTRSWIVALKSLMLLHGVLCCKVPSVVGEFRRLPFDLSDFSDGHSCLSKTWGFNVFVRTYFAFLHHYSSFLSDQIHRLRGNNRRSLEKTSDSVIQELERIQKLQSLLDMILQIRPVADNMKKTLILEAMDCLVIESINIYGRICGAVMKVLPLAGKSEAATVLKIVNKTTSQGEDLIVYFEFCKGFGVSNAREIPQFVRIPEEEVEAIEKMIDTVQEKPKLEKDEEKEDEKAMVVLEQPKKLQTIITDKWEIFEDDYRCFDRKDKWEIFEDEYHQNHLPLITMNQPVYITYTMPDLITF.

An ENTH domain is found at 26 to 158 (NSSYRNADLE…SFLSDQIHRL (133 aa)).

The protein localises to the membrane. It is found in the clathrin-coated pit. It localises to the golgi apparatus. The protein resides in the cytoplasmic vesicle. Its subcellular location is the clathrin-coated vesicle. The sequence is that of Putative clathrin assembly protein At1g68110 from Arabidopsis thaliana (Mouse-ear cress).